We begin with the raw amino-acid sequence, 62 residues long: MDPGECTCMSGGICICGDNCKCTTCSCKTCRKSCCPCCPPGCAKCARGCICKGGSDKCSCCP.

Residues cysteine 6, cysteine 8, cysteine 14, cysteine 16, cysteine 20, cysteine 22, cysteine 25, cysteine 27, cysteine 30, cysteine 34, cysteine 35, cysteine 37, cysteine 38, cysteine 42, cysteine 45, cysteine 49, cysteine 51, cysteine 58, cysteine 60, and cysteine 61 each contribute to the a divalent metal cation site.

This sequence belongs to the metallothionein superfamily. Type 1 family. In terms of tissue distribution, expressed exclusively in stratified squamous epithelia associated with oral epithelia, esophagus, upper stomach, tail, footpads and neonatal skin.

Functionally, seems to bind zinc and copper. Could play a special role in regulating zinc metabolism during the differentiation of stratified epithelia. This is Metallothionein-4 (Mt4) from Mus musculus (Mouse).